The sequence spans 263 residues: Endonuclease 8 (263 aa).

P2 (schiff-base intermediate with DNA) is an active-site residue. Residue E3 is the Proton donor of the active site. K53 functions as the Proton donor; for beta-elimination activity in the catalytic mechanism. DNA-binding residues include Q70, R125, and N169. Residues 229 to 263 form an FPG-type zinc finger; sequence KVFHRDGEACERCGGIIEKTTLSSRPFYWCPHCQK. R253 acts as the Proton donor; for delta-elimination activity in catalysis.

This sequence belongs to the FPG family. Zn(2+) is required as a cofactor.

It carries out the reaction 2'-deoxyribonucleotide-(2'-deoxyribose 5'-phosphate)-2'-deoxyribonucleotide-DNA = a 3'-end 2'-deoxyribonucleotide-(2,3-dehydro-2,3-deoxyribose 5'-phosphate)-DNA + a 5'-end 5'-phospho-2'-deoxyribonucleoside-DNA + H(+). In terms of biological role, involved in base excision repair of DNA damaged by oxidation or by mutagenic agents. Acts as a DNA glycosylase that recognizes and removes damaged bases. Has a preference for oxidized pyrimidines, such as thymine glycol, 5,6-dihydrouracil and 5,6-dihydrothymine. Has AP (apurinic/apyrimidinic) lyase activity and introduces nicks in the DNA strand. Cleaves the DNA backbone by beta-delta elimination to generate a single-strand break at the site of the removed base with both 3'- and 5'-phosphates. The protein is Endonuclease 8 of Salmonella heidelberg (strain SL476).